Here is a 1285-residue protein sequence, read N- to C-terminus: Peroxidasin homolog pxn-1 (1285 aa).

The first 20 residues, 1-20, serve as a signal peptide directing secretion; that stretch reads MNLYLLLLVIATSSWQFVAG. The LRRNT domain maps to 21 to 53; it reads LECPVECTCDKKGLVVDCSSSGLTRIPKNISRN. LRR repeat units follow at residues 27–49, 50–72, 73–96, 97–120, 122–143, 145–168, and 204–227; these read CTCD…IPKN, ISRN…RSDL, EGFN…ENVL, DHLP…PLCS, SRPL…EQVL, YFPD…KLFD, and KVYC…SALT. Asparagine 49 carries an N-linked (GlcNAc...) asparagine glycan. The region spanning 180–228 is the LRRCT domain; the sequence is SNPWHCDCRASKVKALLQKVKWEKKVYCTNPVELRHQALDEVDDSALTC. Asparagine 248 carries an N-linked (GlcNAc...) asparagine glycan. Residues 305-324 form a disordered region; that stretch reads RQSQHQGNGSPQFTYKPRDN. The segment covering 307–317 has biased composition (polar residues); the sequence is SQHQGNGSPQF. Ig-like C2-type domains lie at 315–401 and 408–495; these read PQFT…FSLD and PNIY…AKLT. 2 cysteine pairs are disulfide-bonded: cysteine 336–cysteine 385 and cysteine 429–cysteine 479. A coiled-coil region spans residues 508–550; the sequence is QIDEELLRAIAQKARQNVENAVEKTRKQLTQDKVTNTNDLKRL. N-linked (GlcNAc...) asparagine glycosylation occurs at asparagine 595. Cysteines 625 and 641 form a disulfide. Aspartate 719 provides a ligand contact to heme b. Histidine 720 acts as the Proton acceptor in catalysis. Ca(2+) is bound at residue aspartate 721. Disulfide bonds link cysteine 740/cysteine 750 and cysteine 744/cysteine 771. The N-linked (GlcNAc...) asparagine glycan is linked to asparagine 741. Threonine 803, phenylalanine 805, aspartate 807, and serine 809 together coordinate Ca(2+). Asparagine 858 is a glycosylation site (N-linked (GlcNAc...) asparagine). Heme b contacts are provided by glutamate 877 and histidine 973. LRR repeat units lie at residues 998–1022 and 1049–1073; these read HKAF…GLFA and VSLD…TEYR. Cystine bridges form between cysteine 1076–cysteine 1133 and cysteine 1174–cysteine 1201. One copy of the LRR 12 repeat lies at 1168–1189; it reads TLARLFCDNGDNIDRIQKDVFM.

This sequence belongs to the peroxidase family. XPO subfamily. Ca(2+) is required as a cofactor. It depends on heme b as a cofactor. Expressed in the ventral nerve cord, the dorsal nerve cord, head neurons, GABAergic and cholinergic neurons, body wall muscles, vulval muscles, uterine muscles, intestine, the hypodermis and in coelomocytes.

It is found in the secreted. It localises to the extracellular space. The protein localises to the extracellular matrix. The enzyme catalyses L-lysyl-[collagen] + L-methionyl-[collagen] + H2O2 = [collagen]-L-lysyl-N-S-L-methionyl-[collagen] + 2 H2O + H(+). The catalysed reaction is bromide + H2O2 = hypobromite + H2O. It carries out the reaction L-lysyl-[collagen] + L-methionyl-[collagen] + hypobromite = [collagen]-L-lysyl-N-S-L-methionyl-[collagen] + bromide + H2O + H(+). It catalyses the reaction L-tyrosyl-[protein] + bromide + H2O2 + H(+) = 3-bromo-L-tyrosyl-[protein] + 2 H2O. The enzyme catalyses hypobromite + L-tyrosyl-[protein] + H(+) = 3-bromo-L-tyrosyl-[protein] + H2O. Its function is as follows. Catalyzes the two-electron oxidation of bromide by hydrogen peroxide and generates hypobromite as a reactive intermediate which mediates the formation of sulfilimine cross-links between methionine and hydroxylysine residues within an uncross-linked collagen IV NC1 hexamer. Plays a role in the attachment of tissues and in axonal guidance during early developmental stages. May functionally antagonize the peroxidasin pxn-2 to maintain neuronal development. The polypeptide is Peroxidasin homolog pxn-1 (Caenorhabditis elegans).